Here is a 231-residue protein sequence, read N- to C-terminus: NADH-ubiquinone oxidoreductase chain 4 (231 aa).

6 helical membrane-spanning segments follow: residues 1-21 (PIAGSMVLAAILLKLGGYGII), 34-54 (MFLPFIVLALWGAVLANLTCL), 63-85 (IAYSSISHMGLVVATIIIQTPWG), 89-111 (AMALMIAHGFTSSALFCLANTTY), 128-148 (ILPMATTWWLLANLMNIAIPP), and 169-189 (TIILLGLSMLITACYSLHMLL).

The protein belongs to the complex I subunit 4 family.

The protein localises to the mitochondrion membrane. The enzyme catalyses a ubiquinone + NADH + 5 H(+)(in) = a ubiquinol + NAD(+) + 4 H(+)(out). Core subunit of the mitochondrial membrane respiratory chain NADH dehydrogenase (Complex I) that is believed to belong to the minimal assembly required for catalysis. Complex I functions in the transfer of electrons from NADH to the respiratory chain. The immediate electron acceptor for the enzyme is believed to be ubiquinone. The chain is NADH-ubiquinone oxidoreductase chain 4 (MT-ND4) from Bothrops bilineatus (Green jararaca).